A 327-amino-acid chain; its full sequence is Glycolipid sulfotransferase BCG_1434 (327 aa).

Residue 40–45 (KSGLTW) coordinates 3'-phosphoadenylyl sulfate. H97 (proton acceptor) is an active-site residue. 116–124 (RDPRDAAVS) is a 3'-phosphoadenylyl sulfate binding site.

The protein belongs to the sulfotransferase 1 family.

In terms of biological role, involved in the synthesis of cell wall sulfolipids. The chain is Glycolipid sulfotransferase BCG_1434 from Mycobacterium bovis (strain BCG / Pasteur 1173P2).